A 302-amino-acid chain; its full sequence is Homoserine kinase (302 aa).

92–102 serves as a coordination point for ATP; that stretch reads PLARGLGSSAT.

The protein belongs to the GHMP kinase family. Homoserine kinase subfamily.

It is found in the cytoplasm. The catalysed reaction is L-homoserine + ATP = O-phospho-L-homoserine + ADP + H(+). Its pathway is amino-acid biosynthesis; L-threonine biosynthesis; L-threonine from L-aspartate: step 4/5. In terms of biological role, catalyzes the ATP-dependent phosphorylation of L-homoserine to L-homoserine phosphate. The polypeptide is Homoserine kinase (Trichormus variabilis (strain ATCC 29413 / PCC 7937) (Anabaena variabilis)).